The chain runs to 208 residues: F-box/kelch-repeat protein At2g43270 (208 aa).

In terms of domain architecture, F-box spans 1–44 (MIYVVPDLLEEIFLGLPLKSILRFKTVSKQWRSILESKSFAERR). The Kelch repeat unit spans residues 149–200 (RDKFNGSYKVVRMCFSPVEKCEVLDVETGEWSELNPPPNDIDVGRKSVCVNG).

This is F-box/kelch-repeat protein At2g43270 from Arabidopsis thaliana (Mouse-ear cress).